We begin with the raw amino-acid sequence, 422 residues long: Protein FAM53B (422 aa).

Phosphoserine is present on residues S119, S168, S170, S180, S213, and S269. Disordered stretches follow at residues 193-225 (GQPC…GRLD) and 243-269 (CPPS…RSRS). Over residues 244–269 (PPSANSTPASTPELARRSSGLARSRS) the composition is skewed to low complexity. Residues 282 to 285 (KRRR) carry the Nuclear localization signal motif. 2 positions are modified to phosphoserine: S335 and S344.

The protein belongs to the FAM53 family. As to quaternary structure, interacts with CTNNB1.

It localises to the nucleus. In terms of biological role, acts as a regulator of Wnt signaling pathway by regulating beta-catenin (CTNNB1) nuclear localization. This Mus musculus (Mouse) protein is Protein FAM53B.